The following is a 525-amino-acid chain: uncharacterized protein (525 aa).

The next 2 helical transmembrane spans lie at 36–56 (AVAAVSLTALPIVPLALTLAL) and 61–81 (ALPAGAALWASASLLAAAAAI). In terms of domain architecture, PAC spans 173–228 (SAVDIRLERTSADGPQFAHIYCEMTPLRDAEGNLLAIVAQSRDVSEEARLQAEAAA). The 221-residue stretch at 246 to 466 (AVSHELRTPL…VIVVTIPSDA (221 aa)) folds into the Histidine kinase domain. Histidine 249 is subject to Phosphohistidine; by autocatalysis. The tract at residues 506–525 (LHTGEIGREGGHGAAQAKTA) is disordered.

The protein localises to the cell membrane. It carries out the reaction ATP + protein L-histidine = ADP + protein N-phospho-L-histidine.. This is an uncharacterized protein from Rhizobium meliloti (strain 1021) (Ensifer meliloti).